The primary structure comprises 286 residues: Phycobilisome 31.8 kDa linker polypeptide, phycoerythrin-associated, rod (286 aa).

The 178-residue stretch at 2 to 179 (PFGPASRLGV…LVRGASSSSL (178 aa)) folds into the PBS-linker domain. A CpcD-like domain is found at 231 to 286 (GKVYRIEVTGYRAKTFNNISKFRRSNQVFLVPYEKLSQEYQRIHQQGGVIASITPV).

This sequence belongs to the phycobilisome linker protein family. In terms of assembly, the phycobilisome is a hemidiscoidal structure that is composed of two distinct substructures: a core complex and six rods radiating from the core.

The protein resides in the cellular thylakoid membrane. In terms of biological role, rod linker protein, associated with phycoerythrocyanin. Linker polypeptides determine the state of aggregation and the location of the disk-shaped phycobiliprotein units within the phycobilisome and modulate their spectroscopic properties in order to mediate a directed and optimal energy transfer. The sequence is that of Phycobilisome 31.8 kDa linker polypeptide, phycoerythrin-associated, rod (cpeC) from Microchaete diplosiphon (Fremyella diplosiphon).